We begin with the raw amino-acid sequence, 548 residues long: MHIGKKNYPNLITSFRMNLKKIILNHDRFSHPERWKTNALLRFTFVYIKFLFDLMIIKNPLRMVGKTYRDAVTALNSLQSNYANIMAIRQTGDRKNTMTLLEMHEWSRRIGYSASDFNKLNIVHITGTKGKGSTAAFTSSILGQYKEQLPRIGLYTSPHLKSVRERIRINGEPISEEKFAKYFFEVWDRLDSTTSSLDKFPHMIPGSKPGYFKFLTLLSFHTFIQEDCKSCVYEVGVGGELDSTNIIEKPIVCGVTLLGIDHTFMLGDTIEEIAWNKGGIFKSGAPAFTVEKQPPQGLTILKERAEERKTTLTEVPSFKQLENVKLGIAGEFQKSNASLAVMLASEILHTSNILEEKIKCSSNASIPEKFIIGLQNTKWEXRCQVLEKGKNVWYIDGAHTKDSMVAASTWFRDTVRLSKRKKILLFNQQSRDANALVNNLYSSVSPEITFDDVIFTTNVTWKSGSYSADLVSMNTSQEDVEKLKVQESLVKNWNKIDDNRAKTHVTASIEEANELIETLYDEPADIFVTGSLHLVGGLLVVFDRIDVK.

130-133 lines the ATP pocket; sequence GKGS. The Mg(2+) site is built by Ser-157, Glu-234, and His-262. ATP contacts are provided by Arg-382 and Asp-396.

The protein belongs to the folylpolyglutamate synthase family. The cofactor is a monovalent cation.

The protein localises to the mitochondrion inner membrane. It is found in the mitochondrion matrix. Its subcellular location is the cytoplasm. It carries out the reaction (6S)-5,6,7,8-tetrahydrofolyl-(gamma-L-Glu)(n) + L-glutamate + ATP = (6S)-5,6,7,8-tetrahydrofolyl-(gamma-L-Glu)(n+1) + ADP + phosphate + H(+). It participates in cofactor biosynthesis; tetrahydrofolylpolyglutamate biosynthesis. Catalyzes conversion of folates to polyglutamate derivatives allowing concentration of folate compounds in the cell and the intracellular retention of these cofactors, which are important substrates for most of the folate-dependent enzymes that are involved in one-carbon transfer reactions involved in purine, pyrimidine and amino acid synthesis. Required for methionine synthesis and maintenance of intact mitochondrial DNA. Involved in telomere maintenance. The sequence is that of Folylpolyglutamate synthase from Saccharomyces cerevisiae (strain FostersB) (Baker's yeast).